A 453-amino-acid polypeptide reads, in one-letter code: Chromosomal replication initiator protein DnaA (453 aa).

Positions 1 to 73 (MELSPQDLWT…ADVVEEILGY (73 aa)) are domain I, interacts with DnaA modulators. Residues 73 to 110 (YSIDIQLTSTQGENIAIVGETQVSAYYPTLSGEHPKPI) form a domain II region. The interval 111–327 (KLNPKYTFSR…GALIRAITYI (217 aa)) is domain III, AAA+ region. ATP-binding residues include G155, G157, K158, and T159. Positions 328–453 (SISGLSMTVE…HLASRTQKTT (126 aa)) are domain IV, binds dsDNA.

This sequence belongs to the DnaA family. As to quaternary structure, oligomerizes as a right-handed, spiral filament on DNA at oriC.

Its subcellular location is the cytoplasm. Plays an essential role in the initiation and regulation of chromosomal replication. ATP-DnaA binds to the origin of replication (oriC) to initiate formation of the DNA replication initiation complex once per cell cycle. Binds the DnaA box (a 9 base pair repeat at the origin) and separates the double-stranded (ds)DNA. Forms a right-handed helical filament on oriC DNA; dsDNA binds to the exterior of the filament while single-stranded (ss)DNA is stabiized in the filament's interior. The ATP-DnaA-oriC complex binds and stabilizes one strand of the AT-rich DNA unwinding element (DUE), permitting loading of DNA polymerase. After initiation quickly degrades to an ADP-DnaA complex that is not apt for DNA replication. Binds acidic phospholipids. This is Chromosomal replication initiator protein DnaA from Gloeothece citriformis (strain PCC 7424) (Cyanothece sp. (strain PCC 7424)).